The primary structure comprises 331 residues: Phosphate acyltransferase (331 aa).

This sequence belongs to the PlsX family. As to quaternary structure, homodimer. Probably interacts with PlsY.

The protein localises to the cytoplasm. It catalyses the reaction a fatty acyl-[ACP] + phosphate = an acyl phosphate + holo-[ACP]. It functions in the pathway lipid metabolism; phospholipid metabolism. Functionally, catalyzes the reversible formation of acyl-phosphate (acyl-PO(4)) from acyl-[acyl-carrier-protein] (acyl-ACP). This enzyme utilizes acyl-ACP as fatty acyl donor, but not acyl-CoA. The chain is Phosphate acyltransferase from Wolinella succinogenes (strain ATCC 29543 / DSM 1740 / CCUG 13145 / JCM 31913 / LMG 7466 / NCTC 11488 / FDC 602W) (Vibrio succinogenes).